The chain runs to 228 residues: Ribose-5-phosphate isomerase A (228 aa).

Residues 32–35 (TGST), 85–88 (DGAD), and 98–101 (KGGG) contribute to the substrate site. E107 (proton acceptor) is an active-site residue. K125 lines the substrate pocket.

It belongs to the ribose 5-phosphate isomerase family. As to quaternary structure, homodimer.

It carries out the reaction aldehydo-D-ribose 5-phosphate = D-ribulose 5-phosphate. It participates in carbohydrate degradation; pentose phosphate pathway; D-ribose 5-phosphate from D-ribulose 5-phosphate (non-oxidative stage): step 1/1. Catalyzes the reversible conversion of ribose-5-phosphate to ribulose 5-phosphate. This is Ribose-5-phosphate isomerase A from Ralstonia pickettii (strain 12J).